Consider the following 249-residue polypeptide: DNA repair protein RecO (249 aa).

It belongs to the RecO family.

Involved in DNA repair and RecF pathway recombination. This chain is DNA repair protein RecO, found in Lactobacillus delbrueckii subsp. bulgaricus (strain ATCC 11842 / DSM 20081 / BCRC 10696 / JCM 1002 / NBRC 13953 / NCIMB 11778 / NCTC 12712 / WDCM 00102 / Lb 14).